Here is a 346-residue protein sequence, read N- to C-terminus: STE20-related kinase adapter protein stlk (346 aa).

The Protein kinase domain maps to 10-298 (YKLLEILKNG…ASKLMTHSFL (289 aa)). Residues 16 to 24 (LKNGMIGTV) and K38 each bind ATP.

It belongs to the protein kinase superfamily. STE Ser/Thr protein kinase family. STE20 subfamily.

The polypeptide is STE20-related kinase adapter protein stlk (Drosophila melanogaster (Fruit fly)).